A 354-amino-acid polypeptide reads, in one-letter code: uncharacterized protein (354 aa).

The 238-residue stretch at 48–285 (VETWEISKIY…DEGYEVVLKG (238 aa)) folds into the ABC transporter domain. ATP is bound at residue 87 to 94 (GPNGAGKT).

It belongs to the ABC transporter superfamily.

This is an uncharacterized protein from Synechocystis sp. (strain ATCC 27184 / PCC 6803 / Kazusa).